Consider the following 257-residue polypeptide: MRTGVIAKKMGMTRLFQDDGRHVPVTVLSLEGCQVVSVRDKERDGYVAVQLGAGTAKAKNVAKPQRGAYGKAEVEPKAKLVEFRVADDATLDVGAELSADHFVAGQMVDIQGVTQGKGFAGAMKRWGFGGMRATHGVSISHRAHGSTGNRQDPGRVFKNKKMAGHMGARNRTQQNLEIVRTDAERGLLFVKGSVPGSKGGWLLVRDAVKLPRHPEAPYPASIKSAANTNTAPADAPVETPAEEAVVDTAATDGAQES.

Gln-151 is subject to N5-methylglutamine. Residues 218–257 (YPASIKSAANTNTAPADAPVETPAEEAVVDTAATDGAQES) are disordered. Over residues 225 to 236 (AANTNTAPADAP) the composition is skewed to low complexity.

It belongs to the universal ribosomal protein uL3 family. In terms of assembly, part of the 50S ribosomal subunit. Forms a cluster with proteins L14 and L19. Post-translationally, methylated by PrmB.

Functionally, one of the primary rRNA binding proteins, it binds directly near the 3'-end of the 23S rRNA, where it nucleates assembly of the 50S subunit. This chain is Large ribosomal subunit protein uL3, found in Sphingopyxis alaskensis (strain DSM 13593 / LMG 18877 / RB2256) (Sphingomonas alaskensis).